The chain runs to 427 residues: tRNA(Ile)-lysidine synthase (427 aa).

ATP is bound at residue 29-34 (SGGVDS).

The protein belongs to the tRNA(Ile)-lysidine synthase family.

Its subcellular location is the cytoplasm. The enzyme catalyses cytidine(34) in tRNA(Ile2) + L-lysine + ATP = lysidine(34) in tRNA(Ile2) + AMP + diphosphate + H(+). Functionally, ligates lysine onto the cytidine present at position 34 of the AUA codon-specific tRNA(Ile) that contains the anticodon CAU, in an ATP-dependent manner. Cytidine is converted to lysidine, thus changing the amino acid specificity of the tRNA from methionine to isoleucine. This Thermosipho africanus (strain TCF52B) protein is tRNA(Ile)-lysidine synthase.